A 374-amino-acid polypeptide reads, in one-letter code: Chaperone protein DnaJ (374 aa).

A J domain is found at 5–70 (DYYEVLGVAR…DKRARYDRFG (66 aa)). A CR-type zinc finger spans residues 135–213 (GDEVTLRLPK…CKGSGILQQV (79 aa)). Positions 148, 151, 165, 168, 187, 190, 201, and 204 each coordinate Zn(2+). 4 CXXCXGXG motif repeats span residues 148–155 (CDECNGSG), 165–172 (CRHCGGNG), 187–194 (CPVCRGEG), and 201–208 (CPKCKGSG).

The protein belongs to the DnaJ family. In terms of assembly, homodimer. Zn(2+) is required as a cofactor.

The protein resides in the cytoplasm. Functionally, participates actively in the response to hyperosmotic and heat shock by preventing the aggregation of stress-denatured proteins and by disaggregating proteins, also in an autonomous, DnaK-independent fashion. Unfolded proteins bind initially to DnaJ; upon interaction with the DnaJ-bound protein, DnaK hydrolyzes its bound ATP, resulting in the formation of a stable complex. GrpE releases ADP from DnaK; ATP binding to DnaK triggers the release of the substrate protein, thus completing the reaction cycle. Several rounds of ATP-dependent interactions between DnaJ, DnaK and GrpE are required for fully efficient folding. Also involved, together with DnaK and GrpE, in the DNA replication of plasmids through activation of initiation proteins. The sequence is that of Chaperone protein DnaJ from Nitratidesulfovibrio vulgaris (strain DSM 19637 / Miyazaki F) (Desulfovibrio vulgaris).